The primary structure comprises 128 residues: Holin-like protein CidA (128 aa).

The next 4 membrane-spanning stretches (helical) occupy residues 4–24 (LLLT…INWV), 26–46 (ALLH…FTLL), 59–79 (GAAW…VGVI), and 88–108 (FGVS…VSTG).

Belongs to the CidA/LrgA family. CidA subfamily.

It is found in the cell membrane. Its function is as follows. Increases the activity of extracellular murein hydrolases possibly by mediating their export via hole formation. Inhibited by the antiholin-like proteins LrgAB. In an unstressed cell, the LrgAB products probably inhibit the function of the CidA protein. When a cell is stressed by the addition of antibiotics or by other factors in the environment, CidA possibly oligomerizes within the bacterial cell membrane, creating lesions that disrupt the proton motive force, which in turn results in loss of cell viability. These lesions are also hypothesized to regulate the subsequent cell lysis by either allowing the murein hydrolases access to the cell wall substrate and/or regulating their activity by a possible change in the cell wall pH that results from loss of membrane potential. This chain is Holin-like protein CidA, found in Bacillus subtilis (strain 168).